A 66-amino-acid polypeptide reads, in one-letter code: Large ribosomal subunit protein bL31 (66 aa).

Zn(2+) is bound by residues Cys16, Cys18, Cys36, and Cys39.

Belongs to the bacterial ribosomal protein bL31 family. Type A subfamily. Part of the 50S ribosomal subunit. Requires Zn(2+) as cofactor.

In terms of biological role, binds the 23S rRNA. This is Large ribosomal subunit protein bL31 from Campylobacter jejuni subsp. jejuni serotype O:6 (strain 81116 / NCTC 11828).